The following is a 511-amino-acid chain: Probable G-protein coupled receptor 101 (511 aa).

Residues 1–35 (MPPSCTNSTQENNGSRVCLPLSKMPISVAHGIIRS) are Extracellular-facing. N-linked (GlcNAc...) asparagine glycans are attached at residues Asn7 and Asn13. Residues 36–56 (VVLLVILGVAFLGNVVLGYVL) form a helical membrane-spanning segment. At 57–67 (HRKPNLLQVTN) the chain is on the cytoplasmic side. The helical transmembrane segment at 68 to 90 (RFIFNLLVTDLLQVALVAPWVVS) threads the bilayer. The Extracellular segment spans residues 91 to 106 (TAIPFFWPLNIHFCTA). Cysteines 104 and 182 form a disulfide. A helical membrane pass occupies residues 107–127 (LVSLTHLFAFASVNTIVVVSV). Residues 128-149 (DRYLTIIHPLSYPSKMTNRRSY) lie on the Cytoplasmic side of the membrane. Residues 150–170 (ILLYGTWIAAFLQSTPPLYGW) form a helical membrane-spanning segment. Over 171-196 (GHATFDDRNAFCSMIWGASPAYTVVS) the chain is Extracellular. Residues 197–217 (VVSFLVIPLGVMIACYSVVFG) traverse the membrane as a helical segment. Residues 218–398 (AARRQQALLY…PPCYECKAAR (181 aa)) lie on the Cytoplasmic side of the membrane. Residues 240-261 (DSVVHENEEGAKKRDEFQDKNE) are compositionally biased toward basic and acidic residues. Disordered regions lie at residues 240–315 (DSVV…EVSN) and 367–386 (EAMR…TSDP). Polar residues predominate over residues 376-385 (PPSRRNSTSD). The chain crosses the membrane as a helical span at residues 399-419 (VIFVIISTYVLSLGPYCFLAV). Residues 420–432 (LAVWVDIDTRVPQ) are Extracellular-facing. The chain crosses the membrane as a helical span at residues 433-453 (WVITIIIWLFFLQCCIHPYVY). The Cytoplasmic portion of the chain corresponds to 454 to 511 (GYMHKSIKKEIQEVLKKLICKKSPPVEDSHPDLHETEAGTEGGIEGKAVPSHDSATSP). The disordered stretch occupies residues 476–511 (SPPVEDSHPDLHETEAGTEGGIEGKAVPSHDSATSP). The span at 477-490 (PPVEDSHPDLHETE) shows a compositional bias: basic and acidic residues.

Belongs to the G-protein coupled receptor 1 family. As to expression, expressed in the brain in hypothalamus.

Its subcellular location is the cell membrane. Orphan receptor. The polypeptide is Probable G-protein coupled receptor 101 (Gpr101) (Mus musculus (Mouse)).